We begin with the raw amino-acid sequence, 314 residues long: Ribonuclease Z (314 aa).

Zn(2+) contacts are provided by His-61, His-63, Asp-65, His-66, His-137, Asp-207, and His-263. The active-site Proton acceptor is the Asp-65.

Belongs to the RNase Z family. In terms of assembly, homodimer. Zn(2+) serves as cofactor.

It catalyses the reaction Endonucleolytic cleavage of RNA, removing extra 3' nucleotides from tRNA precursor, generating 3' termini of tRNAs. A 3'-hydroxy group is left at the tRNA terminus and a 5'-phosphoryl group is left at the trailer molecule.. In terms of biological role, zinc phosphodiesterase, which displays some tRNA 3'-processing endonuclease activity. Probably involved in tRNA maturation, by removing a 3'-trailer from precursor tRNA. The polypeptide is Ribonuclease Z (Thermococcus gammatolerans (strain DSM 15229 / JCM 11827 / EJ3)).